The primary structure comprises 36 residues: MSDINTARLPVFSLPVFFPFVSDDIQAVLTRGESLC.

Residues 1 to 10 (MSDINTARLP) constitute a propeptide that is removed on maturation. Positions 11–19 (VFSLPVFFP) form a cross-link, cyclopeptide (Val-Pro). The propeptide occupies 20-36 (FVSDDIQAVLTRGESLC).

The protein belongs to the MSDIN fungal toxin family. Processed by the macrocyclase-peptidase enzyme POPB to yield a toxic cyclic nonapeptide. POPB first removes 10 residues from the N-terminus. Conformational trapping of the remaining peptide forces the enzyme to release this intermediate rather than proceed to macrocyclization. The enzyme rebinds the remaining peptide in a different conformation and catalyzes macrocyclization of the N-terminal 9 residues. As to expression, expressed in basidiocarps.

Functionally, cyclic nonapeptide that belongs to the MSDIN-like toxin family responsible for a large number of food poisoning cases and deaths. The protein is Amanexitide proprotein 1 of Amanita exitialis (Guangzhou destroying angel).